The chain runs to 425 residues: Podosporapepsin (425 aa).

Positions 1–28 (MVSLTDLFLASLLVPTSPWLCLPPRIDT) are cleaved as a signal peptide. The propeptide at 29–91 (IDQRGGRVTL…QEEAFARIKR (63 aa)) is activation peptide. In terms of domain architecture, Peptidase A1 spans 108 to 419 (YVTPVTIGTP…GTNPPRIGFA (312 aa)). D126 is a catalytic residue. N-linked (GlcNAc...) asparagine glycans are attached at residues N184 and N273. The active site involves D310. C346 and C381 are oxidised to a cystine. A glycan (N-linked (GlcNAc...) asparagine) is linked at N370.

Belongs to the peptidase A1 family.

The protein is Podosporapepsin (PAPA) of Podospora anserina (Pleurage anserina).